A 269-amino-acid chain; its full sequence is Zinc transporter ZupT (269 aa).

8 helical membrane passes run Val5 to Ile25, Ser38 to Val58, Trp75 to Ile95, Met125 to Phe145, Ile158 to Phe178, Leu190 to Met210, Phe212 to Ile232, and Leu249 to Val269. 2 residues coordinate Fe(2+): Asn137 and Glu140. Zn(2+)-binding residues include Glu140 and His165. Positions 166, 169, and 198 each coordinate Fe(2+). Glu169 is a binding site for Zn(2+).

The protein belongs to the ZIP transporter (TC 2.A.5) family. ZupT subfamily.

The protein resides in the cell membrane. The enzyme catalyses Zn(2+)(in) = Zn(2+)(out). Functionally, mediates zinc uptake. May also transport other divalent cations. The protein is Zinc transporter ZupT of Lysinibacillus sphaericus (strain C3-41).